The following is a 146-amino-acid chain: Mediator of RNA polymerase II transcription subunit 10 (146 aa).

This sequence belongs to the Mediator complex subunit 10 family. Component of the Mediator complex.

The protein resides in the nucleus. Its function is as follows. Component of the Mediator complex, a coactivator involved in the regulated transcription of nearly all RNA polymerase II-dependent genes. Mediator functions as a bridge to convey information from gene-specific regulatory proteins to the basal RNA polymerase II transcription machinery. Mediator is recruited to promoters by direct interactions with regulatory proteins and serves as a scaffold for the assembly of a functional preinitiation complex with RNA polymerase II and the general transcription factors. This chain is Mediator of RNA polymerase II transcription subunit 10 (NUT2), found in Scheffersomyces stipitis (strain ATCC 58785 / CBS 6054 / NBRC 10063 / NRRL Y-11545) (Yeast).